The following is a 382-amino-acid chain: uncharacterized protein (382 aa).

This is an uncharacterized protein from Orgyia pseudotsugata multicapsid polyhedrosis virus (OpMNPV).